The chain runs to 369 residues: Chaperone protein DnaJ (369 aa).

The J domain maps to 5–70 (DYYEVLGVGR…NKRAAYDQFG (66 aa)). The CR-type zinc-finger motif lies at 128-206 (GAETQIRIPR…CHGAGWVKRQ (79 aa)). Zn(2+) is bound by residues cysteine 141, cysteine 144, cysteine 158, cysteine 161, cysteine 180, cysteine 183, cysteine 194, and cysteine 197. CXXCXGXG motif repeat units lie at residues 141–148 (CDTCHGSG), 158–165 (CPTCNGHG), 180–187 (CSHCQGSG), and 194–201 (CGDCHGAG).

This sequence belongs to the DnaJ family. As to quaternary structure, homodimer. The cofactor is Zn(2+).

The protein resides in the cytoplasm. Functionally, participates actively in the response to hyperosmotic and heat shock by preventing the aggregation of stress-denatured proteins and by disaggregating proteins, also in an autonomous, DnaK-independent fashion. Unfolded proteins bind initially to DnaJ; upon interaction with the DnaJ-bound protein, DnaK hydrolyzes its bound ATP, resulting in the formation of a stable complex. GrpE releases ADP from DnaK; ATP binding to DnaK triggers the release of the substrate protein, thus completing the reaction cycle. Several rounds of ATP-dependent interactions between DnaJ, DnaK and GrpE are required for fully efficient folding. Also involved, together with DnaK and GrpE, in the DNA replication of plasmids through activation of initiation proteins. This chain is Chaperone protein DnaJ, found in Nitrosomonas europaea (strain ATCC 19718 / CIP 103999 / KCTC 2705 / NBRC 14298).